The primary structure comprises 421 residues: Anhydromevalonate phosphate decarboxylase (421 aa).

2 residues coordinate Mn(2+): asparagine 131 and glutamate 194. Catalysis depends on aspartate 240, which acts as the Proton acceptor.

The protein belongs to the UbiD family. Prenylated FMN is required as a cofactor. Requires Mn(2+) as cofactor.

It carries out the reaction (2E)-3-methyl-5-phosphooxypent-2-enoate + H(+) = isopentenyl phosphate + CO2. It participates in isoprenoid biosynthesis; isopentenyl diphosphate biosynthesis via mevalonate pathway. In terms of biological role, catalyzes the conversion of trans-anhydromevalonate 5-phosphate (tAHMP) into isopentenyl phosphate. Involved in the archaeal mevalonate (MVA) pathway, which provides fundamental precursors for isoprenoid biosynthesis, such as isopentenyl diphosphate (IPP) and dimethylallyl diphosphate (DMAPP). This is Anhydromevalonate phosphate decarboxylase from Methanocaldococcus jannaschii (strain ATCC 43067 / DSM 2661 / JAL-1 / JCM 10045 / NBRC 100440) (Methanococcus jannaschii).